Reading from the N-terminus, the 95-residue chain is Aspartyl/glutamyl-tRNA(Asn/Gln) amidotransferase subunit C (95 aa).

The protein belongs to the GatC family. In terms of assembly, heterotrimer of A, B and C subunits.

It carries out the reaction L-glutamyl-tRNA(Gln) + L-glutamine + ATP + H2O = L-glutaminyl-tRNA(Gln) + L-glutamate + ADP + phosphate + H(+). The catalysed reaction is L-aspartyl-tRNA(Asn) + L-glutamine + ATP + H2O = L-asparaginyl-tRNA(Asn) + L-glutamate + ADP + phosphate + 2 H(+). In terms of biological role, allows the formation of correctly charged Asn-tRNA(Asn) or Gln-tRNA(Gln) through the transamidation of misacylated Asp-tRNA(Asn) or Glu-tRNA(Gln) in organisms which lack either or both of asparaginyl-tRNA or glutaminyl-tRNA synthetases. The reaction takes place in the presence of glutamine and ATP through an activated phospho-Asp-tRNA(Asn) or phospho-Glu-tRNA(Gln). This is Aspartyl/glutamyl-tRNA(Asn/Gln) amidotransferase subunit C from Gluconobacter oxydans (strain 621H) (Gluconobacter suboxydans).